The primary structure comprises 382 residues: Inactive ubiquitin-specific protease 5 (382 aa).

In terms of domain architecture, DUSP spans V16–I141. The region spanning T323–V382 is the USP domain.

It belongs to the peptidase C19 family. As to expression, widely expressed with the highest expression in floral organs.

The protein localises to the cell membrane. In terms of biological role, plays an important role in the development of floral organs and chloroplasts. Does not possess deubiquitinating enzyme activity in vitro. This is Inactive ubiquitin-specific protease 5 from Oryza sativa subsp. japonica (Rice).